Here is a 145-residue protein sequence, read N- to C-terminus: D-aminoacyl-tRNA deacylase (145 aa).

Residues 137 to 138 (GP) carry the Gly-cisPro motif, important for rejection of L-amino acids motif.

It belongs to the DTD family. Homodimer.

It localises to the cytoplasm. It catalyses the reaction glycyl-tRNA(Ala) + H2O = tRNA(Ala) + glycine + H(+). It carries out the reaction a D-aminoacyl-tRNA + H2O = a tRNA + a D-alpha-amino acid + H(+). Functionally, an aminoacyl-tRNA editing enzyme that deacylates mischarged D-aminoacyl-tRNAs. Also deacylates mischarged glycyl-tRNA(Ala), protecting cells against glycine mischarging by AlaRS. Acts via tRNA-based rather than protein-based catalysis; rejects L-amino acids rather than detecting D-amino acids in the active site. By recycling D-aminoacyl-tRNA to D-amino acids and free tRNA molecules, this enzyme counteracts the toxicity associated with the formation of D-aminoacyl-tRNA entities in vivo and helps enforce protein L-homochirality. The polypeptide is D-aminoacyl-tRNA deacylase (Salmonella agona (strain SL483)).